The primary structure comprises 802 residues: Bifunctional purine biosynthetic protein ADE5,7 (802 aa).

The GARS stretch occupies residues 1 to 444 (MPEITAFPQP…FRRDIAYRAL (444 aa)). The ATP-grasp domain occupies 126 to 339 (KEFMARHNIP…LAEVLLACVE (214 aa)). 157-218 (KPFTSGRSVI…EEYLSGPEIS (62 aa)) contacts ATP. Positions 307 and 309 each coordinate Mg(2+). The AIRS stretch occupies residues 455–788 (LTYAAAGVSV…EAWVIGEVQE (334 aa)).

In the N-terminal section; belongs to the GARS family. It in the C-terminal section; belongs to the AIR synthase family. In terms of assembly, homodimer. Mg(2+) serves as cofactor. Requires Mn(2+) as cofactor.

Its subcellular location is the cytoplasm. The protein localises to the cytosol. It catalyses the reaction 2-formamido-N(1)-(5-O-phospho-beta-D-ribosyl)acetamidine + ATP = 5-amino-1-(5-phospho-beta-D-ribosyl)imidazole + ADP + phosphate + H(+). The enzyme catalyses 5-phospho-beta-D-ribosylamine + glycine + ATP = N(1)-(5-phospho-beta-D-ribosyl)glycinamide + ADP + phosphate + H(+). The protein operates within purine metabolism; IMP biosynthesis via de novo pathway; 5-amino-1-(5-phospho-D-ribosyl)imidazole from N(2)-formyl-N(1)-(5-phospho-D-ribosyl)glycinamide: step 2/2. It functions in the pathway purine metabolism; IMP biosynthesis via de novo pathway; N(1)-(5-phospho-D-ribosyl)glycinamide from 5-phospho-alpha-D-ribose 1-diphosphate: step 2/2. Catalyzes the second and fifth step in the 'de novo' purine biosynthesis pathway; contains phosphoribosylamine--glycine ligase (GARS) and phosphoribosylformylglycinamidine cyclo-ligase (AIRS) activities. The chain is Bifunctional purine biosynthetic protein ADE5,7 from Cryptococcus neoformans var. grubii serotype A (strain H99 / ATCC 208821 / CBS 10515 / FGSC 9487) (Filobasidiella neoformans var. grubii).